A 479-amino-acid polypeptide reads, in one-letter code: DNA polymerase IV (479 aa).

One can recognise a UmuC domain in the interval I7–G189. The Mg(2+) site is built by D11 and D105. E106 is a catalytic residue. Disordered stretches follow at residues A357–W400 and D430–P479. Over residues A381 to L396 the composition is skewed to basic and acidic residues.

Belongs to the DNA polymerase type-Y family. In terms of assembly, monomer. It depends on Mg(2+) as a cofactor.

It is found in the cytoplasm. It catalyses the reaction DNA(n) + a 2'-deoxyribonucleoside 5'-triphosphate = DNA(n+1) + diphosphate. Its function is as follows. Poorly processive, error-prone DNA polymerase involved in untargeted mutagenesis. Copies undamaged DNA at stalled replication forks, which arise in vivo from mismatched or misaligned primer ends. These misaligned primers can be extended by PolIV. Exhibits no 3'-5' exonuclease (proofreading) activity. May be involved in translesional synthesis, in conjunction with the beta clamp from PolIII. This is DNA polymerase IV from Streptomyces coelicolor (strain ATCC BAA-471 / A3(2) / M145).